Reading from the N-terminus, the 432-residue chain is Homeobox protein Hox-D3 (432 aa).

4 disordered regions span residues 43–62 (YSTPHQPYPPPAAASSLDTD), 68–197 (CSIQ…SKRV), 253–280 (QKAKGILHSPASQSPERSPPLGGAAGHV), and 400–432 (HHGPCDPHPTYTDLSAHHSSQGRLPEAPKLTHL). Residues 97–106 (NSQGGGGGSQ) show a composition bias toward gly residues. Positions 116 to 131 (PPQPPPPPPTLPPSSP) are enriched in pro residues. Over residues 148–158 (NASSSSATISK) the composition is skewed to polar residues. Positions 160–165 (IFPWMK) match the Antp-type hexapeptide motif. A DNA-binding region (homeobox) is located at residues 194-253 (SKRVRTAYTSAQLVELEKEFHFNRYLCRPRRVEMANLLNLTERQIKIWFQNRRMKYKKDQ).

This sequence belongs to the Antp homeobox family.

The protein resides in the nucleus. In terms of biological role, sequence-specific transcription factor which is part of a developmental regulatory system that provides cells with specific positional identities on the anterior-posterior axis. This is Homeobox protein Hox-D3 (HOXD3) from Homo sapiens (Human).